The following is a 386-amino-acid chain: 2,3,4,5-tetrahydropyridine-2,6-dicarboxylate N-succinyltransferase (386 aa).

Catalysis depends on Glu-257, which acts as the Acyl-anhydride intermediate. Succinyl-CoA-binding positions include Arg-259, Gly-274, Ser-277, Ala-300, 315-316 (DA), Gly-323, Lys-349, and 362-365 (RQDS).

Belongs to the type 2 tetrahydrodipicolinate N-succinyltransferase family. In terms of assembly, homotrimer.

The protein resides in the cytoplasm. The catalysed reaction is (S)-2,3,4,5-tetrahydrodipicolinate + succinyl-CoA + H2O = (S)-2-succinylamino-6-oxoheptanedioate + CoA. Its pathway is amino-acid biosynthesis; L-lysine biosynthesis via DAP pathway; LL-2,6-diaminopimelate from (S)-tetrahydrodipicolinate (succinylase route): step 1/3. Its function is as follows. Catalyzes the conversion of the cyclic tetrahydrodipicolinate (THDP) into the acyclic N-succinyl-L-2-amino-6-oxopimelate using succinyl-CoA. This Campylobacter jejuni subsp. jejuni serotype O:2 (strain ATCC 700819 / NCTC 11168) protein is 2,3,4,5-tetrahydropyridine-2,6-dicarboxylate N-succinyltransferase.